We begin with the raw amino-acid sequence, 84 residues long: Apovitellenin-1 (84 aa).

The protein belongs to the apovitellenin family. As to quaternary structure, monomer.

Functionally, protein component of the very low density lipoprotein (VLDL) of egg-laying females. Potent lipoprotein lipase inhibitor, preventing the loss of triglycerides from VLDL on their way from the liver to the growing oocytes. The chain is Apovitellenin-1 from Dromaius novaehollandiae (Emu).